The following is a 429-amino-acid chain: Probable imidazolonepropionase (429 aa).

The 4-imidazolone-5-propanoate site is built by Tyr161 and His194. Tyr161 contributes to the N-formimidoyl-L-glutamate binding site. His262 serves as a coordination point for Fe(3+). His262 contributes to the Zn(2+) binding site. Residue Glu265 participates in 4-imidazolone-5-propanoate binding. Position 336 (Asp336) interacts with Fe(3+). Asp336 is a Zn(2+) binding site. Asn338 provides a ligand contact to N-formimidoyl-L-glutamate.

It belongs to the metallo-dependent hydrolases superfamily. HutI family. Requires Zn(2+) as cofactor. The cofactor is Fe(3+).

The catalysed reaction is 4-imidazolone-5-propanoate + H2O = N-formimidoyl-L-glutamate. Its pathway is amino-acid degradation; L-histidine degradation into L-glutamate; N-formimidoyl-L-glutamate from L-histidine: step 3/3. The protein is Probable imidazolonepropionase (amdhd1) of Nematostella vectensis (Starlet sea anemone).